The chain runs to 356 residues: Guanine nucleotide-binding protein alpha-2 subunit (356 aa).

Gly-2 carries the N-myristoyl glycine lipid modification. Cys-4 carries the S-palmitoyl cysteine lipid modification. Positions 35 to 356 (REVKLLLLGA…LTNNLRDIVL (322 aa)) constitute a G-alpha domain. The segment at 38–51 (KLLLLGAGESGKST) is G1 motif. Positions 46, 47, 48, 49, 50, 51, 153, 178, 184, 206, 272, 273, 275, and 329 each coordinate GTP. Ser-50 contacts Mg(2+). The interval 176 to 184 (DILRCRNKT) is G2 motif. Thr-184 is a Mg(2+) binding site. A G3 motif region spans residues 199–208 (YRIFDVGGQR). A G4 motif region spans residues 268 to 275 (ILFLNKVD). The segment at 327–332 (TNATDV) is G5 motif.

The protein belongs to the G-alpha family. As to quaternary structure, g proteins are composed of 3 units; alpha, beta and gamma. The alpha chain contains the guanine nucleotide binding site. Mg(2+) is required as a cofactor.

Functionally, guanine nucleotide-binding proteins (G proteins) are involved as modulators or transducers in various transmembrane signaling systems. In Mycosarcoma maydis (Corn smut fungus), this protein is Guanine nucleotide-binding protein alpha-2 subunit (GPA2).